The chain runs to 624 residues: Kelch-like ECH-associated protein 1 (624 aa).

Cys38 carries the S-(2-succinyl)cysteine modification. One can recognise a BTB domain in the interval 77-149; it reads CDVTLQVKYE…AYTASISVGE (73 aa). Arg135 participates in a covalent cross-link: N5-[4-(S-L-cysteinyl)-5-methyl-1H-imidazol-2-yl]-L-ornithine (Arg-Cys) (interchain with C-151 in KEAP1). An S-(2,3-dicarboxypropyl)cysteine; alternate modification is found at Cys151. Cys151 carries the post-translational modification S-(2-succinyl)cysteine; alternate. At Cys151 the chain carries S-nitrosocysteine; alternate. Cys151 participates in a covalent cross-link: N5-[4-(S-L-cysteinyl)-5-methyl-1H-imidazol-2-yl]-L-ornithine (Cys-Arg) (interchain with R-135 in KEAP1). The BACK domain occupies 184-286; the sequence is AIGIANFAEQ…TPRFLQTQLQ (103 aa). S-(2-succinyl)cysteine is present on Cys241. An S-(2,3-dicarboxypropyl)cysteine mark is found at Cys257 and Cys273. An S-(2,3-dicarboxypropyl)cysteine; alternate modification is found at Cys288. Cys288 bears the S-(2-succinyl)cysteine; alternate mark. An S-(2-succinyl)cysteine modification is found at Cys319. Kelch repeat units lie at residues 327-372, 373-423, 424-470, 471-517, 519-564, and 565-611; these read LIYT…VVGG, LLYA…VIDG, HIYA…VLNR, LLYA…VLHN, IYAA…VHQG, and KIYV…VTME. Cys434 is subject to S-cGMP-cysteine. Cys613 bears the S-(2-succinyl)cysteine mark.

It belongs to the KEAP1 family. Component of the BCR(KEAP1) E3 ubiquitin ligase complex, at least composed of 2 molecules of CUL3, 2 molecules of KEAP1, and RBX1. Interacts with NFE2L2/NRF2; the interaction is direct. Forms a ternary complex with NFE2L2/NRF2 and PGAM5. Interacts with (phosphorylated) SQSTM1/p62; the interaction is direct and inactivates the BCR(KEAP1) complex by sequestering it in inclusion bodies, promoting its degradation. Interacts with NFE2L1. Interacts with BPTF and PTMA. Interacts with MAP1LC3B. Interacts indirectly with ENC1. Interacts with SESN1 and SESN2. Interacts with HSP90AA1 and HSP90AB1. Interacts with PGCKA1; this interaction prevents the ubiquitination of KEAP1 by TRIM25, thus protecting KEAP1 from degradation. Non-enzymatic covalent modifications of reactive cysteines by electrophile metabolites inactivate the BCR(KEAP1) complex. Accumulation of fumarate promotes the formation of cysteine S-succination (S-(2-succinyl)cysteine), leading to inactivate the BCR(KEAP1) complex and promote NFE2L2/NRF2 nuclear accumulation and activation. Nitric oxide-dependent 8-Nitro-cGMP formation promotes cysteine guanylation (S-cGMP-cysteine), leading to NFE2L2/NRF2 nuclear accumulation and activation. Itaconate, an anti-inflammatory metabolite generated in response to lipopolysaccharide, alkylates cysteines, activating NFE2L2/NRF2. Methylglyoxal, a reactive metabolite that accumulates when the glycolytic enzyme PGK1 is inhibited, promotes formation of a methylimidazole cross-link between proximal Cys-151 and Arg-135 on another KEAP1 molecule, resulting in an inactive dimer that inactivates the BCR(KEAP1) complex. Post-translationally, degraded via a proteasomal-independent process during selective autophagy: interaction with phosphorylated SQSTM1/p62 sequesters KEAP1 in inclusion bodies, leading to its degradation. In terms of processing, auto-ubiquitinated by the BCR(KEAP1) complex. Quinone-induced oxidative stress, but not sulforaphane, increases its ubiquitination. Ubiquitination and subsequent degradation is most pronounced following prolonged exposure of cells to oxidative stress, particularly in glutathione-deficient cells that are highly susceptible to oxidative stress. Deubiquitinated by USP25; leading to stabilization. Ubiquitinated by TRIM25; leading to degradation upon ER stress.

Its subcellular location is the cytoplasm. It localises to the nucleus. The protein operates within protein modification; protein ubiquitination. Ubiquitin ligase activity of the BCR(KEAP1) complex is inhibited by oxidative stress and electrophile metabolites such as sulforaphane. Electrophile metabolites react with reactive cysteine residues in KEAP1 and trigger non-enzymatic covalent modifications of these cysteine residues, leading to inactivate the ubiquitin ligase activity of the BCR(KEAP1) complex. Selective autophagy also inactivates the BCR(KEAP1) complex via interaction between KEAP1 and SQSTM1/p62, which sequesters the complex in inclusion bodies and promotes its degradation. Its function is as follows. Substrate-specific adapter of a BCR (BTB-CUL3-RBX1) E3 ubiquitin ligase complex that regulates the response to oxidative stress by targeting NFE2L2/NRF2 for ubiquitination. KEAP1 acts as a key sensor of oxidative and electrophilic stress: in normal conditions, the BCR(KEAP1) complex mediates ubiquitination and degradation of NFE2L2/NRF2, a transcription factor regulating expression of many cytoprotective genes. In response to oxidative stress, different electrophile metabolites trigger non-enzymatic covalent modifications of highly reactive cysteine residues in KEAP1, leading to inactivate the ubiquitin ligase activity of the BCR(KEAP1) complex, promoting NFE2L2/NRF2 nuclear accumulation and expression of phase II detoxifying enzymes. In response to selective autophagy, KEAP1 is sequestered in inclusion bodies following its interaction with SQSTM1/p62, leading to inactivation of the BCR(KEAP1) complex and activation of NFE2L2/NRF2. The BCR(KEAP1) complex also mediates ubiquitination of SQSTM1/p62, increasing SQSTM1/p62 sequestering activity and degradation. The BCR(KEAP1) complex also targets BPTF and PGAM5 for ubiquitination and degradation by the proteasome. The polypeptide is Kelch-like ECH-associated protein 1 (Mus musculus (Mouse)).